A 212-amino-acid polypeptide reads, in one-letter code: Imidazole glycerol phosphate synthase subunit HisH (212 aa).

Residues Arg-2–Ser-212 enclose the Glutamine amidotransferase type-1 domain. The Nucleophile role is filled by Cys-85. Residues His-192 and Glu-194 contribute to the active site.

In terms of assembly, heterodimer of HisH and HisF.

The protein localises to the cytoplasm. It carries out the reaction 5-[(5-phospho-1-deoxy-D-ribulos-1-ylimino)methylamino]-1-(5-phospho-beta-D-ribosyl)imidazole-4-carboxamide + L-glutamine = D-erythro-1-(imidazol-4-yl)glycerol 3-phosphate + 5-amino-1-(5-phospho-beta-D-ribosyl)imidazole-4-carboxamide + L-glutamate + H(+). It catalyses the reaction L-glutamine + H2O = L-glutamate + NH4(+). Its pathway is amino-acid biosynthesis; L-histidine biosynthesis; L-histidine from 5-phospho-alpha-D-ribose 1-diphosphate: step 5/9. In terms of biological role, IGPS catalyzes the conversion of PRFAR and glutamine to IGP, AICAR and glutamate. The HisH subunit catalyzes the hydrolysis of glutamine to glutamate and ammonia as part of the synthesis of IGP and AICAR. The resulting ammonia molecule is channeled to the active site of HisF. The chain is Imidazole glycerol phosphate synthase subunit HisH from Gluconobacter oxydans (strain 621H) (Gluconobacter suboxydans).